Here is a 242-residue protein sequence, read N- to C-terminus: Small ribosomal subunit protein uS7m (242 aa).

The N-terminal 37 residues, 1–37 (MAAPTAKVSRGWSGLALGVRIAVLRLPGLTQVRWSRY), are a transit peptide targeting the mitochondrion. N6-acetyllysine is present on lysine 228.

This sequence belongs to the universal ribosomal protein uS7 family. In terms of assembly, component of the mitochondrial ribosome small subunit (28S) which comprises a 12S rRNA and about 30 distinct proteins.

The protein resides in the mitochondrion. The sequence is that of Small ribosomal subunit protein uS7m (MRPS7) from Bos taurus (Bovine).